The sequence spans 427 residues: 3-phosphoshikimate 1-carboxyvinyltransferase (427 aa).

Lys22, Ser23, and Arg27 together coordinate 3-phosphoshikimate. Lys22 lines the phosphoenolpyruvate pocket. Gly96 and Arg124 together coordinate phosphoenolpyruvate. 3-phosphoshikimate-binding residues include Ser169, Ser170, Gln171, Ser197, Asp313, Asn336, and Lys340. Gln171 contributes to the phosphoenolpyruvate binding site. The Proton acceptor role is filled by Asp313. Residues Arg344, Arg386, and Lys411 each coordinate phosphoenolpyruvate.

The protein belongs to the EPSP synthase family. Monomer.

Its subcellular location is the cytoplasm. The catalysed reaction is 3-phosphoshikimate + phosphoenolpyruvate = 5-O-(1-carboxyvinyl)-3-phosphoshikimate + phosphate. The protein operates within metabolic intermediate biosynthesis; chorismate biosynthesis; chorismate from D-erythrose 4-phosphate and phosphoenolpyruvate: step 6/7. Functionally, catalyzes the transfer of the enolpyruvyl moiety of phosphoenolpyruvate (PEP) to the 5-hydroxyl of shikimate-3-phosphate (S3P) to produce enolpyruvyl shikimate-3-phosphate and inorganic phosphate. The chain is 3-phosphoshikimate 1-carboxyvinyltransferase from Citrobacter koseri (strain ATCC BAA-895 / CDC 4225-83 / SGSC4696).